The chain runs to 497 residues: MFNHDWKYSINSKTFADLNIELFRNHKFKTVLNYIIGVVGWNGLKLALFVSDIYTCIKLLAFNSWSNNIIKPYLPFKISKWLFSGCILASIVLLIWEAIAGMRIYKTGNISLTYVNNFSRNLNSVLNYSKFCVYNMIERKGFRQKMTFFTFFQLKDCIRLIFTDTPRQVINGLTLWSVLVTVNKNEDLGDLESFTGLINKIKNIGQTNHEEAVILSLMLFSFIIWALFVFKFLLAVICSIFVYYKIINDQEYSGLREYICVTVSENVDELVERQRKKENDDTIYKTGLLESQTFDDFKEVENKIETSFNDTSYASNNDSMIELIERRPEYKSQDVCGPIPTMKKTETMESFVDNGNPQYTTRFSAILDSPYINSYESNDIKKAKIQSRSVNTPKYEDLSSSDIFNKIHSAGQLKSTTSMEFHGPLDSMPNTTNNIRNFNSNSSRPRPPPLQTKSSINSKADSNDNGRIYTPMKAYFREPDLPRKGLLEDEDRTYNYT.

Residues 1 to 29 (MFNHDWKYSINSKTFADLNIELFRNHKFK) are Extracellular-facing. A helical membrane pass occupies residues 30-50 (TVLNYIIGVVGWNGLKLALFV). Topologically, residues 51 to 80 (SDIYTCIKLLAFNSWSNNIIKPYLPFKISK) are cytoplasmic. A helical membrane pass occupies residues 81–101 (WLFSGCILASIVLLIWEAIAG). The Extracellular portion of the chain corresponds to 102–216 (MRIYKTGNIS…TNHEEAVILS (115 aa)). A helical transmembrane segment spans residues 217-237 (LMLFSFIIWALFVFKFLLAVI). Over 238 to 497 (CSIFVYYKII…EDEDRTYNYT (260 aa)) the chain is Cytoplasmic. Phosphoserine is present on residues Ser-291 and Ser-319. The tract at residues 420 to 469 (EFHGPLDSMPNTTNNIRNFNSNSSRPRPPPLQTKSSINSKADSNDNGRIY) is disordered. Residues 429-444 (PNTTNNIRNFNSNSSR) are compositionally biased toward low complexity. Residues 451 to 465 (QTKSSINSKADSNDN) are compositionally biased toward polar residues.

This sequence belongs to the KCH1 low affinity K(+) transporter family.

Its subcellular location is the vacuole membrane. It is found in the cell membrane. The catalysed reaction is K(+)(in) = K(+)(out). Functionally, low affinity potassium transporter that, with PRM6/KCH2, participates in high-affinity Ca(2+) influx system (HACS) activation during the response to mating pheromone. Directly promotes K(+) influx and HACS may electrochemically respond to this K(+) influx. KCH1 and KCH2 act at the apex of the calcium signaling pathway that is used for survival during prolonged exposures to mating pheromones. The protein is Low affinity K(+) transporter 1 of Saccharomyces cerevisiae (strain ATCC 204508 / S288c) (Baker's yeast).